Reading from the N-terminus, the 143-residue chain is Spliceosomal protein DIB1 (143 aa).

Residue Ala-2 is modified to N-acetylalanine.

It belongs to the DIM1 family. In terms of assembly, component of the U4/U6-U5 tri-snRNP complex composed of the U4, U6 and U5 snRNAs and at least PRP3, PRP4, PRP6, PRP8, PRP18, PRP31, PRP38, SNU13, SNU23, SNU66, SNU114, SPP381, SMB1, SMD1, SMD2, SMD3, SMX2, SMX3, LSM2, LSM3, LSM4, LSM5, LSM6, LSM7, LSM8, BRR2 and DIB1.

Its subcellular location is the nucleus. In terms of biological role, essential role in pre-mRNA splicing. Also essential for entry into mitosis (G2/M progression) as well as for chromosome segregation during mitosis. The protein is Spliceosomal protein DIB1 (DIB1) of Saccharomyces cerevisiae (strain ATCC 204508 / S288c) (Baker's yeast).